The following is a 157-amino-acid chain: Dihydrofolate reductase type 1 (157 aa).

One can recognise a DHFR domain in the interval 2–156; that stretch reads KLSLMVAISK…INYSYQIWQK (155 aa).

Belongs to the dihydrofolate reductase family. As to quaternary structure, homodimer.

It catalyses the reaction (6S)-5,6,7,8-tetrahydrofolate + NADP(+) = 7,8-dihydrofolate + NADPH + H(+). It participates in cofactor biosynthesis; tetrahydrofolate biosynthesis; 5,6,7,8-tetrahydrofolate from 7,8-dihydrofolate: step 1/1. In terms of biological role, key enzyme in folate metabolism. Catalyzes an essential reaction for de novo glycine and purine synthesis, and for DNA precursor synthesis. This chain is Dihydrofolate reductase type 1 (dhfrI), found in Escherichia coli.